Reading from the N-terminus, the 257-residue chain is Trans-aconitate 2-methyltransferase (257 aa).

This sequence belongs to the methyltransferase superfamily. Tam family.

It is found in the cytoplasm. It catalyses the reaction trans-aconitate + S-adenosyl-L-methionine = (E)-3-(methoxycarbonyl)pent-2-enedioate + S-adenosyl-L-homocysteine. Catalyzes the S-adenosylmethionine monomethyl esterification of trans-aconitate. The chain is Trans-aconitate 2-methyltransferase from Rhizobium meliloti (strain 1021) (Ensifer meliloti).